A 292-amino-acid chain; its full sequence is ATP-dependent Clp protease proteolytic subunit 4, chloroplastic (292 aa).

The N-terminal 65 residues, 1 to 65, are a transit peptide targeting the chloroplast; sequence MGTLSLSSSL…LRFANASIEM (65 aa). S66 is modified (N-acetylserine). The Nucleophile role is filled by S158. H183 is an active-site residue.

It belongs to the peptidase S14 family. Component of the chloroplastic Clp protease core complex which consist of at least 16 proteins: CLPP4 (3 copies), CLPP5 (3 copies), CLPR4 (2 copies), ClpP1 (1 copy), CLPP6 (1 copy), CLPR2 (1 copy), CLPT1 (1 copy), CLPT2 (1 copy) and 3 copies of CLPP3 and/or CLPR1 and/or CLPR3. Interacts with CHIP. The core complex is organized in two heptameric rings, one containing CLPP3,4,5,6 in a 1:2:3:1 ratio and the other CLPP1 and CLPR1,2,3,4 in a 3:1:1:1:1 ratio. Ubiquitinated by CHIP. Mostly expressed in leaves. Also detected in stems, and to a lower extent, in roots (at protein level).

The protein localises to the plastid. The protein resides in the chloroplast stroma. The enzyme catalyses Hydrolysis of proteins to small peptides in the presence of ATP and magnesium. alpha-casein is the usual test substrate. In the absence of ATP, only oligopeptides shorter than five residues are hydrolyzed (such as succinyl-Leu-Tyr-|-NHMec, and Leu-Tyr-Leu-|-Tyr-Trp, in which cleavage of the -Tyr-|-Leu- and -Tyr-|-Trp bonds also occurs).. In terms of biological role, cleaves peptides in various proteins in a process that requires ATP hydrolysis. Has a chymotrypsin-like activity. Plays a major role in the degradation of misfolded proteins. Essential protein required for chloroplast development and integrity. Essential for Embryogenesis. This chain is ATP-dependent Clp protease proteolytic subunit 4, chloroplastic, found in Arabidopsis thaliana (Mouse-ear cress).